Consider the following 476-residue polypeptide: Aspartyl/glutamyl-tRNA(Asn/Gln) amidotransferase subunit B (476 aa).

This sequence belongs to the GatB/GatE family. GatB subfamily. In terms of assembly, heterotrimer of A, B and C subunits.

The catalysed reaction is L-glutamyl-tRNA(Gln) + L-glutamine + ATP + H2O = L-glutaminyl-tRNA(Gln) + L-glutamate + ADP + phosphate + H(+). It catalyses the reaction L-aspartyl-tRNA(Asn) + L-glutamine + ATP + H2O = L-asparaginyl-tRNA(Asn) + L-glutamate + ADP + phosphate + 2 H(+). Functionally, allows the formation of correctly charged Asn-tRNA(Asn) or Gln-tRNA(Gln) through the transamidation of misacylated Asp-tRNA(Asn) or Glu-tRNA(Gln) in organisms which lack either or both of asparaginyl-tRNA or glutaminyl-tRNA synthetases. The reaction takes place in the presence of glutamine and ATP through an activated phospho-Asp-tRNA(Asn) or phospho-Glu-tRNA(Gln). The sequence is that of Aspartyl/glutamyl-tRNA(Asn/Gln) amidotransferase subunit B from Clostridium botulinum (strain Kyoto / Type A2).